Here is a 336-residue protein sequence, read N- to C-terminus: Fructose-1,6-bisphosphatase class 1 (336 aa).

Residues glutamate 90, aspartate 112, leucine 114, and aspartate 115 each coordinate Mg(2+). Substrate-binding positions include 115-118 (DGSS), asparagine 211, and lysine 277. Glutamate 283 lines the Mg(2+) pocket.

Belongs to the FBPase class 1 family. Homotetramer. Requires Mg(2+) as cofactor.

It is found in the cytoplasm. The enzyme catalyses beta-D-fructose 1,6-bisphosphate + H2O = beta-D-fructose 6-phosphate + phosphate. The protein operates within carbohydrate biosynthesis; gluconeogenesis. This chain is Fructose-1,6-bisphosphatase class 1, found in Pseudomonas entomophila (strain L48).